The chain runs to 430 residues: MANVVVVGAQWGDEGKGKIVDWLSEQADIVVRFQGGHNAGHTLVINGATYKLALLPSGVLRTGKLSVIGNGVVFDPQAFLDEVSKLQSQGVAISPDNLRVAENVTLILPLHRELDALRESASAATAIGTTRRGIGPAYEDKVGRRAIRLMDLADLDTLPHKIDRLLAHHNALRRGLGLEQIDGKDILRELTAFAPKLLPYAETVWRLLDIKRREGKRMLFEGAQGALLDVDHGTYPYVTSSNTVAAQAATGAGLGPGAIGYVLGLCKAYTTRVGQGPFPTEQDNETGRKIGERGREFGTNTGRPRRCGWFDAVLVRQAVRTCGINGLALTKLDILDGFDTIDVCTGYRLDGKEIDHFPAGEGAQARVEPIYETIEGWKQPTANARSWADLPAQAIKYVRRIEELVGCPIALLSTSPEREDTILVQNPFEA.

Residues 12 to 18 (GDEGKGK) and 40 to 42 (GHT) each bind GTP. Catalysis depends on aspartate 13, which acts as the Proton acceptor. Mg(2+) is bound by residues aspartate 13 and glycine 40. IMP-binding positions include 13 to 16 (DEGK), 38 to 41 (NAGH), threonine 130, arginine 144, glutamine 224, and threonine 239. Histidine 41 acts as the Proton donor in catalysis. Residues 277-298 (PFPTEQDNETGRKIGERGREFG) form a disordered region. A compositionally biased stretch (basic and acidic residues) spans 285 to 296 (ETGRKIGERGRE). 299-305 (TNTGRPR) provides a ligand contact to substrate. Arginine 303 lines the IMP pocket. Residues arginine 305, 331–333 (KLD), and 413–415 (STS) contribute to the GTP site.

Belongs to the adenylosuccinate synthetase family. Homodimer. Mg(2+) serves as cofactor.

Its subcellular location is the cytoplasm. The enzyme catalyses IMP + L-aspartate + GTP = N(6)-(1,2-dicarboxyethyl)-AMP + GDP + phosphate + 2 H(+). It functions in the pathway purine metabolism; AMP biosynthesis via de novo pathway; AMP from IMP: step 1/2. Plays an important role in the de novo pathway of purine nucleotide biosynthesis. Catalyzes the first committed step in the biosynthesis of AMP from IMP. This chain is Adenylosuccinate synthetase, found in Bradyrhizobium sp. (strain BTAi1 / ATCC BAA-1182).